A 554-amino-acid polypeptide reads, in one-letter code: CTP synthase (554 aa).

The interval 1 to 265 (MTPLIFVTGG…DEIVIDQFKL (265 aa)) is amidoligase domain. S13 serves as a coordination point for CTP. S13 lines the UTP pocket. Residues 14-19 (SLGKGI) and D71 each bind ATP. Residues D71 and E139 each contribute to the Mg(2+) site. Residues 146 to 148 (DIE), 186 to 191 (KTKPTQ), and K222 contribute to the CTP site. UTP contacts are provided by residues 186 to 191 (KTKPTQ) and K222. The Glutamine amidotransferase type-1 domain occupies 292–545 (TIAVVGKYVD…VKASRARKAG (254 aa)). G353 lines the L-glutamine pocket. C380 serves as the catalytic Nucleophile; for glutamine hydrolysis. L-glutamine-binding positions include 381–384 (YGMQ), E404, and R471. Active-site residues include H518 and E520.

It belongs to the CTP synthase family. As to quaternary structure, homotetramer.

The enzyme catalyses UTP + L-glutamine + ATP + H2O = CTP + L-glutamate + ADP + phosphate + 2 H(+). It carries out the reaction L-glutamine + H2O = L-glutamate + NH4(+). The catalysed reaction is UTP + NH4(+) + ATP = CTP + ADP + phosphate + 2 H(+). The protein operates within pyrimidine metabolism; CTP biosynthesis via de novo pathway; CTP from UDP: step 2/2. Its activity is regulated as follows. Allosterically activated by GTP, when glutamine is the substrate; GTP has no effect on the reaction when ammonia is the substrate. The allosteric effector GTP functions by stabilizing the protein conformation that binds the tetrahedral intermediate(s) formed during glutamine hydrolysis. Inhibited by the product CTP, via allosteric rather than competitive inhibition. Catalyzes the ATP-dependent amination of UTP to CTP with either L-glutamine or ammonia as the source of nitrogen. Regulates intracellular CTP levels through interactions with the four ribonucleotide triphosphates. This is CTP synthase from Xylella fastidiosa (strain M23).